A 126-amino-acid polypeptide reads, in one-letter code: Aspartate 1-decarboxylase (126 aa).

Ser25 serves as the catalytic Schiff-base intermediate with substrate; via pyruvic acid. Ser25 carries the post-translational modification Pyruvic acid (Ser). Thr57 is a binding site for substrate. Tyr58 functions as the Proton donor in the catalytic mechanism. 73–75 serves as a coordination point for substrate; it reads GAA.

The protein belongs to the PanD family. In terms of assembly, heterooctamer of four alpha and four beta subunits. The cofactor is pyruvate. Is synthesized initially as an inactive proenzyme, which is activated by self-cleavage at a specific serine bond to produce a beta-subunit with a hydroxyl group at its C-terminus and an alpha-subunit with a pyruvoyl group at its N-terminus.

It localises to the cytoplasm. It carries out the reaction L-aspartate + H(+) = beta-alanine + CO2. It functions in the pathway cofactor biosynthesis; (R)-pantothenate biosynthesis; beta-alanine from L-aspartate: step 1/1. Functionally, catalyzes the pyruvoyl-dependent decarboxylation of aspartate to produce beta-alanine. This Escherichia coli O6:H1 (strain CFT073 / ATCC 700928 / UPEC) protein is Aspartate 1-decarboxylase.